The following is a 574-amino-acid chain: Isocitrate dehydrogenase kinase/phosphatase (574 aa).

ATP is bound by residues 315–321 and lysine 336; that span reads APGIRGM. Aspartate 371 is a catalytic residue.

Belongs to the AceK family.

The protein resides in the cytoplasm. It carries out the reaction L-seryl-[isocitrate dehydrogenase] + ATP = O-phospho-L-seryl-[isocitrate dehydrogenase] + ADP + H(+). In terms of biological role, bifunctional enzyme which can phosphorylate or dephosphorylate isocitrate dehydrogenase (IDH) on a specific serine residue. This is a regulatory mechanism which enables bacteria to bypass the Krebs cycle via the glyoxylate shunt in response to the source of carbon. When bacteria are grown on glucose, IDH is fully active and unphosphorylated, but when grown on acetate or ethanol, the activity of IDH declines drastically concomitant with its phosphorylation. The polypeptide is Isocitrate dehydrogenase kinase/phosphatase (Escherichia coli O127:H6 (strain E2348/69 / EPEC)).